We begin with the raw amino-acid sequence, 316 residues long: Transaldolase (316 aa).

The active-site Schiff-base intermediate with substrate is Lys-131.

This sequence belongs to the transaldolase family. Type 1 subfamily. Homodimer.

The protein resides in the cytoplasm. The catalysed reaction is D-sedoheptulose 7-phosphate + D-glyceraldehyde 3-phosphate = D-erythrose 4-phosphate + beta-D-fructose 6-phosphate. The protein operates within carbohydrate degradation; pentose phosphate pathway; D-glyceraldehyde 3-phosphate and beta-D-fructose 6-phosphate from D-ribose 5-phosphate and D-xylulose 5-phosphate (non-oxidative stage): step 2/3. In terms of biological role, transaldolase is important for the balance of metabolites in the pentose-phosphate pathway. This chain is Transaldolase, found in Sodalis glossinidius (strain morsitans).